A 270-amino-acid polypeptide reads, in one-letter code: Gap junction beta-3 protein (270 aa).

Residues 1 to 20 (MDWKKLQDLLSGVNQYSTAF) are Cytoplasmic-facing. A helical membrane pass occupies residues 21-40 (GRIWLSVVFVFRVLVYVVAA). Residues 41 to 75 (ERVWGDEQKDFDCNTRQPGCTNVCYDNFFPISNIR) lie on the Extracellular side of the membrane. Residues 76–98 (LWALQLIFVTCPSMLVILHVAYR) traverse the membrane as a helical segment. At 99-126 (EERERKHRQKHGEHCAKLYSHPGKKHGG) the chain is on the cytoplasmic side. A helical membrane pass occupies residues 127 to 149 (LWWTYLFSLIFKLIIELVFLYVL). Residues 150–188 (HTLWHGFTMPRLVQCASVVPCPNTVDCYIARPTEKKVFT) are Extracellular-facing. A helical membrane pass occupies residues 189 to 211 (YFMVGASAVCIILTICEICYLIF). At 212–270 (HRIMRGLSKDKSTKSISSPKSSSRASTCRCHHKLLESGDLEAVPADDKLQASAPSLTPI) the chain is on the cytoplasmic side.

The protein belongs to the connexin family. Beta-type (group I) subfamily. In terms of assembly, a connexon is composed of a hexamer of connexins. Interacts with CNST.

The protein resides in the cell membrane. Its subcellular location is the cell junction. It is found in the gap junction. Functionally, one gap junction consists of a cluster of closely packed pairs of transmembrane channels, the connexons, through which materials of low MW diffuse from one cell to a neighboring cell. The chain is Gap junction beta-3 protein (Gjb3) from Rattus norvegicus (Rat).